We begin with the raw amino-acid sequence, 88 residues long: Cell division topological specificity factor (88 aa).

The protein belongs to the MinE family.

Its function is as follows. Prevents the cell division inhibition by proteins MinC and MinD at internal division sites while permitting inhibition at polar sites. This ensures cell division at the proper site by restricting the formation of a division septum at the midpoint of the long axis of the cell. The protein is Cell division topological specificity factor of Methylibium petroleiphilum (strain ATCC BAA-1232 / LMG 22953 / PM1).